A 77-amino-acid polypeptide reads, in one-letter code: Metallothionein-like protein 2B (77 aa).

This sequence belongs to the metallothionein superfamily. Type 15 family. In terms of tissue distribution, expressed in vascular tissues of all organs. Expressed in root and leaf phloem, pollen and root hairs.

In terms of biological role, metallothioneins have a high content of cysteine residues that bind various heavy metals. Functions as a metal chelator of copper (Cu) and zinc (Zn). Functions cooperatively with the phytochelatin synthase PCS1 to protect plants from Cu and cadmium toxicity. Plays a role in Cu homeostasis, specifically in the remobilization of Cu from senescing leaves. The mobilization of Cu from internal sources is important for seed development. The polypeptide is Metallothionein-like protein 2B (MT2B) (Arabidopsis thaliana (Mouse-ear cress)).